We begin with the raw amino-acid sequence, 66 residues long: Large ribosomal subunit protein bL35 (66 aa).

A compositionally biased stretch (basic residues) spans 1-16; the sequence is MPKQKTHRASAKRFKR. Residues 1–20 form a disordered region; the sequence is MPKQKTHRASAKRFKRTGSG.

This sequence belongs to the bacterial ribosomal protein bL35 family.

The sequence is that of Large ribosomal subunit protein bL35 from Streptococcus thermophilus (strain CNRZ 1066).